A 1010-amino-acid chain; its full sequence is Phosphatidylserine decarboxylase proenzyme 2 (1010 aa).

C2 domains lie at 1–114 (MSQA…SSWE) and 247–370 (DFES…DKPC). Residues aspartate 342, serine 345, and aspartate 348 each coordinate Ca(2+). In terms of domain architecture, EF-hand spans 458–493 (LRRQLWMHLLQGNDTQMKGTLDLIELNYFVDCLGSN). Catalysis depends on charge relay system; for autoendoproteolytic cleavage activity residues aspartate 734, histidine 793, and serine 880. Catalysis depends on serine 880, which acts as the Schiff-base intermediate with substrate; via pyruvic acid; for decarboxylase activity. Position 880 is a pyruvic acid (Ser); by autocatalysis (serine 880).

It belongs to the phosphatidylserine decarboxylase family. PSD-B subfamily. Eukaryotic type II sub-subfamily. Heterodimer of a large membrane-associated beta subunit and a small pyruvoyl-containing alpha subunit. Interacts with pstB2. This interaction may be a means to structurally tether the donor membrane (ER) harboring PstB2 to acceptor membranes (Golgi/endosomes) harboring PSD2 during PtdSer transport to the site of PtdEtn synthesis. Pyruvate is required as a cofactor. Ca(2+) serves as cofactor. Post-translationally, is synthesized initially as an inactive proenzyme. Formation of the active enzyme involves a self-maturation process in which the active site pyruvoyl group is generated from an internal serine residue via an autocatalytic post-translational modification. Two non-identical subunits are generated from the proenzyme in this reaction, and the pyruvate is formed at the N-terminus of the alpha chain, which is derived from the carboxyl end of the proenzyme. The autoendoproteolytic cleavage occurs by a canonical serine protease mechanism, in which the side chain hydroxyl group of the serine supplies its oxygen atom to form the C-terminus of the beta chain, while the remainder of the serine residue undergoes an oxidative deamination to produce ammonia and the pyruvoyl prosthetic group on the alpha chain. During this reaction, the Ser that is part of the protease active site of the proenzyme becomes the pyruvoyl prosthetic group, which constitutes an essential element of the active site of the mature decarboxylase.

It localises to the golgi apparatus membrane. The protein localises to the endosome membrane. The catalysed reaction is a 1,2-diacyl-sn-glycero-3-phospho-L-serine + H(+) = a 1,2-diacyl-sn-glycero-3-phosphoethanolamine + CO2. It functions in the pathway phospholipid metabolism; phosphatidylethanolamine biosynthesis; phosphatidylethanolamine from CDP-diacylglycerol: step 2/2. Functionally, catalyzes the formation of phosphatidylethanolamine (PtdEtn) from phosphatidylserine (PtdSer). Plays a central role in phospholipid metabolism and in the interorganelle trafficking of phosphatidylserine. In Komagataella phaffii (strain GS115 / ATCC 20864) (Yeast), this protein is Phosphatidylserine decarboxylase proenzyme 2.